Here is a 485-residue protein sequence, read N- to C-terminus: Ulvan lyase (485 aa).

The signal sequence occupies residues 1 to 33 (MIRNDTMLKGQFVLKKTQIALSAALMGSVLLTG). The N-palmitoyl cysteine moiety is linked to residue Cys-34. Cys-34 carries the S-diacylglycerol cysteine lipid modification. 2 residues coordinate substrate: Asn-64 and Asn-126. Positions 108-128 (FKAGTSELGRRDGGKKFDNHG) are disordered. The span at 115–128 (LGRRDGGKKFDNHG) shows a compositional bias: basic and acidic residues. Catalysis depends on His-127, which acts as the Proton donor. Residues Lys-129 and His-147 each coordinate substrate. The Proton acceptor role is filled by Tyr-192. Substrate-binding residues include Arg-208, His-212, and Tyr-250. Zn(2+) is bound at residue His-212. Zn(2+)-binding residues include His-268, Cys-270, and His-282. His-282 is a substrate binding site.

This sequence belongs to the polysaccharide lyase 25 family.

Its subcellular location is the cell membrane. Its function is as follows. Ulvan lyase involved in ulvan degradation. Ulvan is the main polysaccharide component of the Ulvales (green seaweed) cell wall. It is composed of disaccharide building blocks comprising 3-sulfated rhamnose (Rha3S) linked to D-glucuronic acid (GlcA), L-iduronic acid (IduA), or D-xylose (Xyl). Ulvan lyase catalyzes the endolytic cleavage of the glycosidic bond between Rha3S and the uronic acids GlcA or IduA, producing oligosaccharides that have unsaturated 4-deoxy-L-threo-hex-4-enopyranosiduronic acid (deltaUA) at the non-reducing end. This results eventually in the degradation of the ulvan polysaccharide into deltaUA-Rha3S disaccharides and deltaUA-Rha3S-Xyl-Rha3S tetrasaccharides. The protein is Ulvan lyase of Alteromonas sp. (strain LOR).